The chain runs to 163 residues: Transcription antitermination protein NusB (163 aa).

This sequence belongs to the NusB family.

Involved in transcription antitermination. Required for transcription of ribosomal RNA (rRNA) genes. Binds specifically to the boxA antiterminator sequence of the ribosomal RNA (rrn) operons. The sequence is that of Transcription antitermination protein NusB from Mycolicibacterium vanbaalenii (strain DSM 7251 / JCM 13017 / BCRC 16820 / KCTC 9966 / NRRL B-24157 / PYR-1) (Mycobacterium vanbaalenii).